Consider the following 101-residue polypeptide: Phosphoribosyl-AMP cyclohydrolase (101 aa).

Asp-71 contacts Mg(2+). Residue Cys-72 participates in Zn(2+) binding. Mg(2+) contacts are provided by Asp-73 and Asp-75. The Zn(2+) site is built by Cys-88 and Cys-95.

Belongs to the PRA-CH family. As to quaternary structure, homodimer. It depends on Mg(2+) as a cofactor. Zn(2+) serves as cofactor.

Its subcellular location is the cytoplasm. It carries out the reaction 1-(5-phospho-beta-D-ribosyl)-5'-AMP + H2O = 1-(5-phospho-beta-D-ribosyl)-5-[(5-phospho-beta-D-ribosylamino)methylideneamino]imidazole-4-carboxamide. The protein operates within amino-acid biosynthesis; L-histidine biosynthesis; L-histidine from 5-phospho-alpha-D-ribose 1-diphosphate: step 3/9. Functionally, catalyzes the hydrolysis of the adenine ring of phosphoribosyl-AMP. The protein is Phosphoribosyl-AMP cyclohydrolase of Bacillus cereus (strain AH187).